The primary structure comprises 144 residues: MAGVSVKDVDAQKFITAYAAFLKRSGKMTTPQWIDIVKTGTHKELAPYDPDWYYVRAAAIARHIYLRKQVGVGRLCKVYGGSVNRGMRPSHHRDGSGSVQRKVVQSLEKIGVLEKSDNGGRRISQQGQRDLDRIAYSLLEEESE.

The tract at residues 83–102 (VNRGMRPSHHRDGSGSVQRK) is disordered.

This sequence belongs to the eukaryotic ribosomal protein eS19 family. Component of the small ribosomal subunit (SSU). Mature yeast ribosomes consist of a small (40S) and a large (60S) subunit. The 40S small subunit contains 1 molecule of ribosomal RNA (18S rRNA) and at least 33 different proteins. The large 60S subunit contains 3 rRNA molecules (25S, 5.8S and 5S rRNA) and at least 46 different proteins.

Its subcellular location is the cytoplasm. It localises to the nucleus. The protein resides in the nucleolus. Its function is as follows. Component of the ribosome, a large ribonucleoprotein complex responsible for the synthesis of proteins in the cell. The small ribosomal subunit (SSU) binds messenger RNAs (mRNAs) and translates the encoded message by selecting cognate aminoacyl-transfer RNA (tRNA) molecules. The large subunit (LSU) contains the ribosomal catalytic site termed the peptidyl transferase center (PTC), which catalyzes the formation of peptide bonds, thereby polymerizing the amino acids delivered by tRNAs into a polypeptide chain. The nascent polypeptides leave the ribosome through a tunnel in the LSU and interact with protein factors that function in enzymatic processing, targeting, and the membrane insertion of nascent chains at the exit of the ribosomal tunnel. eS19 is required for proper maturation of the small (40S) ribosomal subunit. Binds to 40S pre-ribosomal particles, probably required after association of NOC4 but before association of ENP1, TSR1 and RIO2 with 20/21S pre-rRNA. The polypeptide is Small ribosomal subunit protein eS19A (rps1901) (Schizosaccharomyces pombe (strain 972 / ATCC 24843) (Fission yeast)).